Here is a 140-residue protein sequence, read N- to C-terminus: Nucleoside diphosphate kinase (140 aa).

The ATP site is built by lysine 11, phenylalanine 59, arginine 87, threonine 93, arginine 104, and asparagine 114. Catalysis depends on histidine 117, which acts as the Pros-phosphohistidine intermediate.

This sequence belongs to the NDK family. Homotetramer. Mg(2+) serves as cofactor.

Its subcellular location is the cytoplasm. The catalysed reaction is a 2'-deoxyribonucleoside 5'-diphosphate + ATP = a 2'-deoxyribonucleoside 5'-triphosphate + ADP. It carries out the reaction a ribonucleoside 5'-diphosphate + ATP = a ribonucleoside 5'-triphosphate + ADP. Major role in the synthesis of nucleoside triphosphates other than ATP. The ATP gamma phosphate is transferred to the NDP beta phosphate via a ping-pong mechanism, using a phosphorylated active-site intermediate. In Sinorhizobium medicae (strain WSM419) (Ensifer medicae), this protein is Nucleoside diphosphate kinase.